A 435-amino-acid chain; its full sequence is GTPase Der (435 aa).

2 consecutive EngA-type G domains span residues 8–169 (NLVA…NFEN) and 176–351 (FKIA…NNLS). Residues 14–21 (GKPNVGKS), 61–65 (DTGGI), 123–126 (NKLD), 182–189 (GKPNAGKS), 229–233 (DTAGI), and 294–297 (NKWD) contribute to the GTP site. Residues 352–435 (REIKQNLLND…PINLVLKKNK (84 aa)) form the KH-like domain.

It belongs to the TRAFAC class TrmE-Era-EngA-EngB-Septin-like GTPase superfamily. EngA (Der) GTPase family. As to quaternary structure, associates with the 50S ribosomal subunit.

Its function is as follows. GTPase that plays an essential role in the late steps of ribosome biogenesis. The polypeptide is GTPase Der (Mycoplasmopsis pulmonis (strain UAB CTIP) (Mycoplasma pulmonis)).